A 212-amino-acid chain; its full sequence is Adenylate kinase (212 aa).

10-15 contributes to the ATP binding site; it reads GAGKGT. Positions 30 to 59 are NMP; the sequence is AIGDIFRTIIKTSTSEAELINNYVRQGELI. Residues Arg-36, 57 to 59, 85 to 88, and Gln-92 contribute to the AMP site; these read ELI and GYPR. Positions 122-160 are LID; that stretch reads GRYSCKNCGKIYNRYFLQPKTDNVCDVCGSSTFDYRKDD. Arg-123 is a binding site for ATP. The Zn(2+) site is built by Cys-126 and Cys-129. Residue 132–133 coordinates ATP; the sequence is IY. Positions 146 and 149 each coordinate Zn(2+). AMP is bound by residues Arg-157 and Arg-168. Lys-196 contributes to the ATP binding site.

Belongs to the adenylate kinase family. Monomer.

It is found in the cytoplasm. It catalyses the reaction AMP + ATP = 2 ADP. It functions in the pathway purine metabolism; AMP biosynthesis via salvage pathway; AMP from ADP: step 1/1. In terms of biological role, catalyzes the reversible transfer of the terminal phosphate group between ATP and AMP. Plays an important role in cellular energy homeostasis and in adenine nucleotide metabolism. The protein is Adenylate kinase of Rickettsia peacockii (strain Rustic).